The chain runs to 326 residues: Cell surface glycoprotein CD200 receptor 1 (326 aa).

The first 25 residues, 1-25 (MFCFWRTSALAVLLIWGVFVAGSSC), serve as a signal peptide directing secretion. Residues 26 to 238 (TDKNQTTQNN…SRGGNQSLRP (213 aa)) lie on the Extracellular side of the membrane. Residues Asn29, Asn34, Asn35, Asn44, Asn93, Asn101, Asn159, Asn192, Asn207, Asn221, and Asn233 are each glycosylated (N-linked (GlcNAc...) asparagine). Residues 51 to 136 (IGTKALLCCF…YTCETVTPEG (86 aa)) form the Ig-like V-type domain. 2 cysteine pairs are disulfide-bonded: Cys58/Cys129 and Cys82/Cys97. Residues 138-229 (FEKNYDLQVL…GNQSLSIELS (92 aa)) enclose the Ig-like C2-type domain. Intrachain disulfides connect Cys164–Cys213 and Cys183–Cys201. A helical transmembrane segment spans residues 239–259 (YIPYIIPSIIILIIIGCICLL). Over 260–326 (KISGFRKCKL…DCLTLSAIGI (67 aa)) the chain is Cytoplasmic.

This sequence belongs to the CD200R family. In terms of assembly, CD200 and CD200R1 interact via their respective N-terminal Ig-like domains. In terms of tissue distribution, expressed in granulocytes, monocytes, most T-cells and a subset of NK, NKT and B-cells (at protein level). Expressed in the spleen, lung, liver, testis, bone marrow, lymph nodes, spinal cord, kidney, uterus and small intestine. Expressed in mast and dendritic cells. Expressed in the lung of N.brasiliensis-infected mice.

Its subcellular location is the cell membrane. Inhibitory receptor for the CD200/OX2 cell surface glycoprotein. Limits inflammation by inhibiting the expression of pro-inflammatory molecules including TNF-alpha, interferons, and inducible nitric oxide synthase (iNOS) in response to selected stimuli. This chain is Cell surface glycoprotein CD200 receptor 1 (Cd200r1), found in Mus musculus (Mouse).